The primary structure comprises 540 residues: CBL-interacting protein kinase 12 (540 aa).

A disordered region spans residues 1–23 (MLMATVSPARREPTPQAVRASPM). A Protein kinase domain is found at 46–300 (YELGRVLGQG…VPEIIESDWF (255 aa)). Residues 52-60 (LGQGSFAKV) and lysine 75 contribute to the ATP site. Aspartate 168 (proton acceptor) is an active-site residue. The segment at 186–215 (DFGLAAGPDQFDPDGLLHTFCGTPAYVAPE) is activation loop. Pro residues predominate over residues 333–348 (PPPLGLAPPVPPPPQG). A disordered region spans residues 333-380 (PPPLGLAPPVPPPPQGDDPDGSGSESDSSVVSCPATLSTGESQRVRGS). A compositionally biased stretch (low complexity) spans 353 to 364 (GSGSESDSSVVS). The region spanning 370-406 (STGESQRVRGSLPRPASLNAFDIISFSKGFNLSGLFE) is the NAF domain. The interval 409-438 (GNEIRFVSGEPMSDIVKKLEEIAKVKSFTV) is PPI.

Belongs to the protein kinase superfamily. CAMK Ser/Thr protein kinase family. SNF1 subfamily. Mg(2+) serves as cofactor. Post-translationally, autophosphorylated. Expressed at low levels in leaf blades.

It carries out the reaction L-seryl-[protein] + ATP = O-phospho-L-seryl-[protein] + ADP + H(+). The enzyme catalyses L-threonyl-[protein] + ATP = O-phospho-L-threonyl-[protein] + ADP + H(+). In terms of biological role, involved in drought stress tolerance. CIPK serine-threonine protein kinases interact with CBL proteins. Binding of a CBL protein to the regulatory NAF domain of CIPK protein lead to the activation of the kinase in a calcium-dependent manner. The protein is CBL-interacting protein kinase 12 (CIPK12) of Oryza sativa subsp. japonica (Rice).